The sequence spans 263 residues: Bidirectional sugar transporter SWEET3 (263 aa).

The Extracellular segment spans residues 1–7 (MGDKLRL). Residues 8–28 (SIGILGNGASLLLYTAPIVTF) form a helical membrane-spanning segment. The 89-residue stretch at 9-97 (IGILGNGASL…FIYFYYASPK (89 aa)) folds into the MtN3/slv 1 domain. Topologically, residues 29–42 (SRVFKKKSTEEFSC) are cytoplasmic. Residues 43–63 (FPYVMTLFNCLIYTWYGLPIV) form a helical membrane-spanning segment. At 64-71 (SHLWENLP) the chain is on the extracellular side. The helical transmembrane segment at 72 to 92 (LVTINGVGILLESIFIFIYFY) threads the bilayer. At 93 to 103 (YASPKEKIKVG) the chain is on the cytoplasmic side. The chain crosses the membrane as a helical span at residues 104-124 (VTFVPVIVGFGLTTAISALVF). At 125-132 (DDHRHRKS) the chain is on the extracellular side. Residues 133–153 (FVGSVGLVASISMYGSPLVVM) traverse the membrane as a helical segment. A MtN3/slv 2 domain is found at 133-217 (FVGSVGLVAS…ILYFKYKNKK (85 aa)). The Cytoplasmic portion of the chain corresponds to 154 to 165 (KKVIETRSVEYM). Residues 166 to 186 (PFYLSFFSFLASSLWLAYGLL) form a helical membrane-spanning segment. Residues 187–190 (SHDL) lie on the Extracellular side of the membrane. A helical transmembrane segment spans residues 191 to 211 (FLASPNMVATPLGILQLILYF). Residues 212 to 263 (KYKNKKDLAPTTMVITKRNDHDDKNKATLEFVVDVDRNSDTNEKNSNNASSI) are Cytoplasmic-facing.

It belongs to the SWEET sugar transporter family. Forms heterooligomers with SWEET11, SWEET13 and SWEET17.

It localises to the cell membrane. Its function is as follows. Mediates both low-affinity uptake and efflux of sugar across the plasma membrane. The sequence is that of Bidirectional sugar transporter SWEET3 from Arabidopsis thaliana (Mouse-ear cress).